A 524-amino-acid polypeptide reads, in one-letter code: Alkaline phosphatase, tissue-nonspecific isozyme (524 aa).

A signal peptide spans 1–17 (MISPFLVLAIGTCLTNS). D60 contributes to the Mg(2+) binding site. Residues D60 and S110 each coordinate Zn(2+). S110 (phosphoserine intermediate) is an active-site residue. S110 is subject to Phosphoserine. Cysteines 139 and 201 form a disulfide. An N-linked (GlcNAc...) asparagine glycan is attached at N140. T173 contacts Mg(2+). N230 is a glycosylation site (N-linked (GlcNAc...) asparagine). Residue E235 coordinates Ca(2+). A glycan (N-linked (GlcNAc...) asparagine) is linked at N271. Ca(2+) is bound by residues F290 and E291. Residue N303 is glycosylated (N-linked (GlcNAc...) asparagine). D306 serves as a coordination point for Ca(2+). A Mg(2+)-binding site is contributed by E332. The Zn(2+) site is built by D337, H341, D378, and H379. An N-linked (GlcNAc...) asparagine glycan is attached at N430. Residue H454 participates in Zn(2+) binding. C489 and C497 are oxidised to a cystine. S501 carries the GPI-anchor amidated serine lipid modification. Positions 502–524 (SAGSLAAGPLLLALALYPLSVLF) are cleaved as a propeptide — removed in mature form.

The protein belongs to the alkaline phosphatase family. Homodimer. Mg(2+) serves as cofactor. It depends on Zn(2+) as a cofactor. Ca(2+) is required as a cofactor. N-glycosylated.

It is found in the cell membrane. The protein resides in the extracellular vesicle membrane. Its subcellular location is the mitochondrion membrane. The protein localises to the mitochondrion intermembrane space. The catalysed reaction is a phosphate monoester + H2O = an alcohol + phosphate. The enzyme catalyses diphosphate + H2O = 2 phosphate + H(+). It catalyses the reaction pyridoxal 5'-phosphate + H2O = pyridoxal + phosphate. It carries out the reaction phosphoethanolamine + H2O = ethanolamine + phosphate. The catalysed reaction is N-phosphocreatine + H2O = creatine + phosphate. The enzyme catalyses ATP + H2O = ADP + phosphate + H(+). It catalyses the reaction ADP + H2O = AMP + phosphate + H(+). It carries out the reaction AMP + H2O = adenosine + phosphate. With respect to regulation, phosphatase activity is specifically inhibited by 5-((5-chloro-2-methoxyphenyl)sulfonamido)nicotinamide (SBI-425). Its function is as follows. Alkaline phosphatase that metabolizes various phosphate compounds and plays a key role in skeletal mineralization and adaptive thermogenesis. Has broad substrate specificity and can hydrolyze a considerable variety of compounds: however, only a few substrates, such as diphosphate (inorganic pyrophosphate; PPi), pyridoxal 5'-phosphate (PLP) and N-phosphocreatine are natural substrates. Plays an essential role in skeletal and dental mineralization via its ability to hydrolyze extracellular diphosphate, a potent mineralization inhibitor, to phosphate: it thereby promotes hydroxyapatite crystal formation and increases inorganic phosphate concentration. Acts in a non-redundant manner with PHOSPHO1 in skeletal mineralization: while PHOSPHO1 mediates the initiation of hydroxyapatite crystallization in the matrix vesicles (MVs), ALPL/TNAP catalyzes the spread of hydroxyapatite crystallization in the extracellular matrix. Also promotes dephosphorylation of osteopontin (SSP1), an inhibitor of hydroxyapatite crystallization in its phosphorylated state; it is however unclear whether ALPL/TNAP mediates SSP1 dephosphorylation via a direct or indirect manner. Catalyzes dephosphorylation of PLP to pyridoxal (PL), the transportable form of vitamin B6, in order to provide a sufficient amount of PLP in the brain, an essential cofactor for enzymes catalyzing the synthesis of diverse neurotransmitters. Additionally, also able to mediate ATP degradation in a stepwise manner to adenosine, thereby regulating the availability of ligands for purinergic receptors. Also capable of dephosphorylating microbial products, such as lipopolysaccharides (LPS) as well as other phosphorylated small-molecules, such as poly-inosine:cytosine (poly I:C). Acts as a key regulator of adaptive thermogenesis as part of the futile creatine cycle: localizes to the mitochondria of thermogenic fat cells and acts by mediating hydrolysis of N-phosphocreatine to initiate a futile cycle of creatine dephosphorylation and phosphorylation. During the futile creatine cycle, creatine and N-phosphocreatine are in a futile cycle, which dissipates the high energy charge of N-phosphocreatine as heat without performing any mechanical or chemical work. This Homo sapiens (Human) protein is Alkaline phosphatase, tissue-nonspecific isozyme.